The primary structure comprises 470 residues: ATP synthase subunit beta (470 aa).

Residue 148–155 participates in ATP binding; the sequence is GGAGVGKT.

It belongs to the ATPase alpha/beta chains family. In terms of assembly, F-type ATPases have 2 components, CF(1) - the catalytic core - and CF(0) - the membrane proton channel. CF(1) has five subunits: alpha(3), beta(3), gamma(1), delta(1), epsilon(1). CF(0) has three main subunits: a(1), b(2) and c(9-12). The alpha and beta chains form an alternating ring which encloses part of the gamma chain. CF(1) is attached to CF(0) by a central stalk formed by the gamma and epsilon chains, while a peripheral stalk is formed by the delta and b chains.

It localises to the cell inner membrane. The catalysed reaction is ATP + H2O + 4 H(+)(in) = ADP + phosphate + 5 H(+)(out). Functionally, produces ATP from ADP in the presence of a proton gradient across the membrane. The catalytic sites are hosted primarily by the beta subunits. This Saccharophagus degradans (strain 2-40 / ATCC 43961 / DSM 17024) protein is ATP synthase subunit beta.